We begin with the raw amino-acid sequence, 298 residues long: Replication protein A 32 kDa subunit B (298 aa).

Positions 89 to 163 (VRLVGRMLNK…QVVAYSVRRI (75 aa)) form a DNA-binding region, OB.

It belongs to the replication factor A protein 2 family. As to quaternary structure, heterotrimer of RPA1, RPA2 and RPA3 (canonical replication protein A complex). Interacts with RPA1A and RPA3. In terms of processing, phosphorylated in a cell-cycle-dependent manner (from the S phase until mitosis). In response to DNA damage, recruited to DNA-repair nuclear foci, as a hypophosphorylated form.

It is found in the nucleus. In terms of biological role, component of the replication protein A complex (RPA) required for DNA recombination, repair and replication. The activity of RPA is mediated by single-stranded DNA binding and protein interactions. The sequence is that of Replication protein A 32 kDa subunit B (RPA2B) from Oryza sativa subsp. japonica (Rice).